Reading from the N-terminus, the 350-residue chain is Eukaryotic translation initiation factor 3 subunit I (350 aa).

WD repeat units lie at residues 8–49, 51–89, 91–135, 149–188, 198–240, and 296–335; these read GHER…GTLE, HQGVIWSIDVDPDTHLCATGGGDLAIKLWKVETGKCVFT, ESPS…ESLT, QDGAKATVAGWSANGEFIISGHDDGYIYKYDAQTGEAVNS, EKNV…KVYK, and GHFGPLNTVAVHPDGTGYSSGGEDGFIRVHTFDKSYFDFY.

It belongs to the eIF-3 subunit I family. In terms of assembly, component of the eukaryotic translation initiation factor 3 (eIF-3) complex.

Its subcellular location is the cytoplasm. Component of the eukaryotic translation initiation factor 3 (eIF-3) complex, which is involved in protein synthesis of a specialized repertoire of mRNAs and, together with other initiation factors, stimulates binding of mRNA and methionyl-tRNAi to the 40S ribosome. The eIF-3 complex specifically targets and initiates translation of a subset of mRNAs involved in cell proliferation. This chain is Eukaryotic translation initiation factor 3 subunit I, found in Scheffersomyces stipitis (strain ATCC 58785 / CBS 6054 / NBRC 10063 / NRRL Y-11545) (Yeast).